Reading from the N-terminus, the 1135-residue chain is Peroxisomal ATPase PEX6 (1135 aa).

Gly853–Thr860 contacts ATP.

It belongs to the AAA ATPase family. As to quaternary structure, interacts with PEX1; forming the PEX1-PEX6 AAA ATPase complex, which is composed of a heterohexamer formed by a trimer of PEX1-PEX6 dimers.

Its subcellular location is the cytoplasm. The protein resides in the cytosol. The protein localises to the peroxisome membrane. The catalysed reaction is ATP + H2O = ADP + phosphate + H(+). Functionally, component of the PEX1-PEX6 AAA ATPase complex, a protein dislocase complex that mediates the ATP-dependent extraction of the PEX5 receptor from peroxisomal membranes, an essential step for PEX5 recycling. Specifically recognizes PEX5 monoubiquitinated at 'Cys-6', and pulls it out of the peroxisome lumen through the PEX2-PEX10-PEX12 retrotranslocation channel. Extraction by the PEX1-PEX6 AAA ATPase complex is accompanied by unfolding of the TPR repeats and release of bound cargo from PEX5. The chain is Peroxisomal ATPase PEX6 (PEX6) from Pichia angusta (Yeast).